We begin with the raw amino-acid sequence, 229 residues long: Demethylmenaquinone methyltransferase (229 aa).

S-adenosyl-L-methionine is bound by residues T57, D77, and D101 to V102.

It belongs to the class I-like SAM-binding methyltransferase superfamily. MenG/UbiE family.

It catalyses the reaction a 2-demethylmenaquinol + S-adenosyl-L-methionine = a menaquinol + S-adenosyl-L-homocysteine + H(+). It participates in quinol/quinone metabolism; menaquinone biosynthesis; menaquinol from 1,4-dihydroxy-2-naphthoate: step 2/2. Functionally, methyltransferase required for the conversion of demethylmenaquinol (DMKH2) to menaquinol (MKH2). The polypeptide is Demethylmenaquinone methyltransferase (Chlamydia muridarum (strain MoPn / Nigg)).